The primary structure comprises 387 residues: Probable serine protease FE772_23060 (387 aa).

The protein belongs to the peptidase S1 family.

Functionally, possibly a dedicated protease for substrate gasdermin bGSDM; cleaves the bGSDM precursor, releasing the pore-forming moiety, which integrates into the membrane and triggers cell death. Involved in defense against bacteriophages. When this probable 4 gene operon (bGSDM-FE772_23060-FE772_23065-FE772_23070) is inserted into E.coli it provides nearly 100-fold protection against phages T5 and T6 and about 8-fold against phage T4. The operon without bGSDM no longer protects against phage. The polypeptide is Probable serine protease FE772_23060 (Lysobacter enzymogenes).